Reading from the N-terminus, the 1052-residue chain is uncharacterized protein (1052 aa).

This sequence belongs to the IIV-6 050L family.

This is an uncharacterized protein from Invertebrate iridescent virus 6 (IIV-6).